Reading from the N-terminus, the 396-residue chain is S-arrestin (396 aa).

The span at 375 to 386 (ARDPLKGELQAE) shows a compositional bias: basic and acidic residues. Residues 375–396 (ARDPLKGELQAEEKEEEEDDEK) form a disordered region. Positions 387–396 (EKEEEEDDEK) are enriched in acidic residues.

The protein belongs to the arrestin family. Interacts with RHO (via the phosphorylated C-terminus).

The protein resides in the cell projection. It is found in the cilium. Its subcellular location is the photoreceptor outer segment. The protein localises to the membrane. Its function is as follows. Binds to photoactivated, phosphorylated RHO and terminates RHO signaling via G-proteins by competing with G-proteins for the same binding site on RHO. May play a role in preventing light-dependent degeneration of retinal photoreceptor cells. This is S-arrestin (sag) from Xenopus laevis (African clawed frog).